A 53-amino-acid polypeptide reads, in one-letter code: uncharacterized protein (53 aa).

Over residues M1 to N10 the composition is skewed to polar residues. Positions M1–S25 are disordered.

This is an uncharacterized protein from Saccharomyces cerevisiae (strain ATCC 204508 / S288c) (Baker's yeast).